The following is a 323-amino-acid chain: Transaldolase (323 aa).

The Schiff-base intermediate with substrate role is filled by lysine 133.

This sequence belongs to the transaldolase family. Type 1 subfamily. As to quaternary structure, monomer.

The catalysed reaction is D-sedoheptulose 7-phosphate + D-glyceraldehyde 3-phosphate = D-erythrose 4-phosphate + beta-D-fructose 6-phosphate. It participates in carbohydrate degradation; pentose phosphate pathway; D-glyceraldehyde 3-phosphate and beta-D-fructose 6-phosphate from D-ribose 5-phosphate and D-xylulose 5-phosphate (non-oxidative stage): step 2/3. Its function is as follows. Transaldolase important for the balance of metabolites in the pentose-phosphate pathway. Involved in xylose fermentation to ethanol. The protein is Transaldolase of Fusarium oxysporum f. sp. lycopersici (strain 4287 / CBS 123668 / FGSC 9935 / NRRL 34936) (Fusarium vascular wilt of tomato).